Consider the following 427-residue polypeptide: MKLRTNAGPLQGTIQVPGDKSISHRAVILGAVAKGETRVKGLLKGEDVLSTIQAFRNLGVRIEEKDDQLVIEGQGFQGLTAPCQTLNMGNSGTSMRLIAGLLAGQPFSVKMIGDESLSKRPMDRIVYPLKQMGVEISGETDRQFPPLQLQGNRNLQPITYTLPISSAQVKSAILLAALQAKGTTQVVEKEITRNHTEEMIQQFGGRLIVDGKRITLVGPQQLTAQEITVPGDISSAAFWLVAGLIIPGSELLLKNVGVNPTRTGILEVVEKMGAQIVYEDMNKKEQVTSIRVVYSHLKGTIISGGLIPRLIDELPIIALLATQAQGTTCIKDAQELRVKETDRIQVVTDILNSMGANIKATADGMIIKGPTVLYGANTSTYGDHRIGMMTAIAALLVKQGQVHLDKEEAIMTSYPTFFKDLERLCHD.

3 residues coordinate 3-phosphoshikimate: Lys20, Ser21, and Arg25. Position 20 (Lys20) interacts with phosphoenolpyruvate. Residues Gly92 and Arg120 each coordinate phosphoenolpyruvate. 3-phosphoshikimate is bound by residues Ser166, Gln168, Asp312, and Lys339. Residue Gln168 coordinates phosphoenolpyruvate. Asp312 functions as the Proton acceptor in the catalytic mechanism. Residues Arg343 and Arg385 each coordinate phosphoenolpyruvate.

It belongs to the EPSP synthase family. In terms of assembly, monomer.

It localises to the cytoplasm. The enzyme catalyses 3-phosphoshikimate + phosphoenolpyruvate = 5-O-(1-carboxyvinyl)-3-phosphoshikimate + phosphate. It participates in metabolic intermediate biosynthesis; chorismate biosynthesis; chorismate from D-erythrose 4-phosphate and phosphoenolpyruvate: step 6/7. Catalyzes the transfer of the enolpyruvyl moiety of phosphoenolpyruvate (PEP) to the 5-hydroxyl of shikimate-3-phosphate (S3P) to produce enolpyruvyl shikimate-3-phosphate and inorganic phosphate. The polypeptide is 3-phosphoshikimate 1-carboxyvinyltransferase (Streptococcus pyogenes serotype M28 (strain MGAS6180)).